Consider the following 299-residue polypeptide: Protease HtpX homolog (299 aa).

2 consecutive transmembrane segments (helical) span residues 15 to 35 and 39 to 59; these read ILLL…GYLF and GLGG…SMIF. Position 143 (His-143) interacts with Zn(2+). Residue Glu-144 is part of the active site. Residue His-147 coordinates Zn(2+). 2 helical membrane passes run 158 to 178 and 198 to 218; these read IAVA…RMMW and IIML…ATLV. Glu-227 serves as a coordination point for Zn(2+).

Belongs to the peptidase M48B family. Requires Zn(2+) as cofactor.

The protein localises to the cell membrane. This chain is Protease HtpX homolog, found in Streptococcus pneumoniae (strain Taiwan19F-14).